A 530-amino-acid chain; its full sequence is C2H2-type transcription factor MSN2 (530 aa).

2 consecutive C2H2-type zinc fingers follow at residues 409–437 (FVCDLCNRRFRRQEHLKRHYRSLHTQEKP) and 438–465 (FECNECGKKFSRSDNLAQHARTHASGGA).

The protein resides in the nucleus. It is found in the cytoplasm. Transcription factor that acts as a key downstream transcription factor in the HOG1-MAPK pathway. Plays crucial roles in the regulation of dimorphism transition, aggravated pigmentation, conidiation, microsclerotia formation and subsequent virulence towards Spodoptera litura larvae. More specifically regulates the expression of genes involved in antioxidation, pigment biosynthesis and ion transport and storage. In Metarhizium rileyi (strain RCEF 4871) (Nomuraea rileyi), this protein is C2H2-type transcription factor MSN2.